Consider the following 79-residue polypeptide: Defensin-like protein 117 (79 aa).

The signal sequence occupies residues 1–24; that stretch reads MTTTKTMLVAFVLTLFFVISSVHC. 4 disulfide bridges follow: Cys-40-Cys-75, Cys-46-Cys-68, Cys-53-Cys-73, and Cys-57-Cys-74.

The protein belongs to the DEFL family.

The protein resides in the secreted. This is Defensin-like protein 117 from Arabidopsis thaliana (Mouse-ear cress).